We begin with the raw amino-acid sequence, 156 residues long: Small ribosomal subunit protein uS7 (156 aa).

Belongs to the universal ribosomal protein uS7 family. In terms of assembly, part of the 30S ribosomal subunit. Contacts proteins S9 and S11.

Its function is as follows. One of the primary rRNA binding proteins, it binds directly to 16S rRNA where it nucleates assembly of the head domain of the 30S subunit. Is located at the subunit interface close to the decoding center, probably blocks exit of the E-site tRNA. The polypeptide is Small ribosomal subunit protein uS7 (Aeromonas hydrophila subsp. hydrophila (strain ATCC 7966 / DSM 30187 / BCRC 13018 / CCUG 14551 / JCM 1027 / KCTC 2358 / NCIMB 9240 / NCTC 8049)).